Reading from the N-terminus, the 206-residue chain is Thiamine-phosphate synthase (206 aa).

Residues 36–40 (QLRMK) and asparagine 68 each bind 4-amino-2-methyl-5-(diphosphooxymethyl)pyrimidine. Residues aspartate 69 and aspartate 88 each coordinate Mg(2+). Serine 106 is a 4-amino-2-methyl-5-(diphosphooxymethyl)pyrimidine binding site. 132–134 (TNT) serves as a coordination point for 2-[(2R,5Z)-2-carboxy-4-methylthiazol-5(2H)-ylidene]ethyl phosphate. Lysine 135 contacts 4-amino-2-methyl-5-(diphosphooxymethyl)pyrimidine. Residues glycine 162 and 182–183 (VS) contribute to the 2-[(2R,5Z)-2-carboxy-4-methylthiazol-5(2H)-ylidene]ethyl phosphate site.

Belongs to the thiamine-phosphate synthase family. The cofactor is Mg(2+).

It carries out the reaction 2-[(2R,5Z)-2-carboxy-4-methylthiazol-5(2H)-ylidene]ethyl phosphate + 4-amino-2-methyl-5-(diphosphooxymethyl)pyrimidine + 2 H(+) = thiamine phosphate + CO2 + diphosphate. It catalyses the reaction 2-(2-carboxy-4-methylthiazol-5-yl)ethyl phosphate + 4-amino-2-methyl-5-(diphosphooxymethyl)pyrimidine + 2 H(+) = thiamine phosphate + CO2 + diphosphate. The catalysed reaction is 4-methyl-5-(2-phosphooxyethyl)-thiazole + 4-amino-2-methyl-5-(diphosphooxymethyl)pyrimidine + H(+) = thiamine phosphate + diphosphate. It functions in the pathway cofactor biosynthesis; thiamine diphosphate biosynthesis; thiamine phosphate from 4-amino-2-methyl-5-diphosphomethylpyrimidine and 4-methyl-5-(2-phosphoethyl)-thiazole: step 1/1. Its function is as follows. Condenses 4-methyl-5-(beta-hydroxyethyl)thiazole monophosphate (THZ-P) and 2-methyl-4-amino-5-hydroxymethyl pyrimidine pyrophosphate (HMP-PP) to form thiamine monophosphate (TMP). This is Thiamine-phosphate synthase from Methanococcus vannielii (strain ATCC 35089 / DSM 1224 / JCM 13029 / OCM 148 / SB).